Consider the following 156-residue polypeptide: 3-hydroxyacyl-[acyl-carrier-protein] dehydratase FabZ (156 aa).

His-61 is a catalytic residue.

The protein belongs to the thioester dehydratase family. FabZ subfamily.

Its subcellular location is the cytoplasm. It carries out the reaction a (3R)-hydroxyacyl-[ACP] = a (2E)-enoyl-[ACP] + H2O. Functionally, involved in unsaturated fatty acids biosynthesis. Catalyzes the dehydration of short chain beta-hydroxyacyl-ACPs and long chain saturated and unsaturated beta-hydroxyacyl-ACPs. This chain is 3-hydroxyacyl-[acyl-carrier-protein] dehydratase FabZ, found in Acaryochloris marina (strain MBIC 11017).